The chain runs to 166 residues: Ureidoglycolate lyase (166 aa).

Belongs to the ureidoglycolate lyase family. Homodimer. It depends on Ni(2+) as a cofactor.

It catalyses the reaction (S)-ureidoglycolate = urea + glyoxylate. It functions in the pathway nitrogen metabolism; (S)-allantoin degradation. In terms of biological role, catalyzes the catabolism of the allantoin degradation intermediate (S)-ureidoglycolate, generating urea and glyoxylate. Involved in the utilization of allantoin as nitrogen source. The polypeptide is Ureidoglycolate lyase (Agrobacterium fabrum (strain C58 / ATCC 33970) (Agrobacterium tumefaciens (strain C58))).